The sequence spans 1500 residues: Carbamoyl-phosphate synthase [ammonia], mitochondrial (1500 aa).

The transit peptide at 1 to 38 directs the protein to the mitochondrion; the sequence is MTRILTACKVVKTLKSGFGFANVTTKRQWDFSRPGIRL. Positions 39–218 are anthranilate phosphoribosyltransferase homolog; it reads LSVKAKTAHI…VKVFGKGNPT (180 aa). Residues K44, K55, K57, and K119 each carry the N6-acetyllysine; alternate modification. Residues K44, K55, K57, and K119 each carry the N6-succinyllysine; alternate modification. N6-glutaryllysine; alternate is present on K55. S148 carries the post-translational modification Phosphoserine. Residues K157 and K171 each carry the N6-acetyllysine; alternate modification. An N6-succinyllysine; alternate modification is found at K157. N6-glutaryllysine; alternate is present on K171. At K176 the chain carries N6-glutaryllysine. Residue K182 is modified to N6-acetyllysine. S189 carries the post-translational modification Phosphoserine. The residue at position 197 (K197) is an N6-acetyllysine. K207, K210, K214, K219, and K228 each carry N6-acetyllysine; alternate. K207 carries the N6-succinyllysine; alternate modification. K207, K210, K214, K219, and K228 each carry N6-glutaryllysine; alternate. The residue at position 214 (K214) is an N6-succinyllysine; alternate. One can recognise a Glutamine amidotransferase type-1 domain in the interval 219–404; sequence KVVAVDCGIK…FSLIKKGKGT (186 aa). The residue at position 237 (K237) is an N6-glutaryllysine. At K279 the chain carries N6-acetyllysine. An N6-acetyllysine; alternate mark is found at K280, K287, K307, and K310. Position 280 is an N6-glutaryllysine; alternate (K280). N6-succinyllysine; alternate is present on residues K287 and K307. N6-glutaryllysine; alternate is present on residues K307 and K310. K400 bears the N6-succinyllysine mark. N6-succinyllysine; alternate occurs at positions 402 and 412. Residues K402, K412, K453, and K458 each carry the N6-glutaryllysine; alternate modification. K412, K453, K458, K522, K527, and K532 each carry N6-acetyllysine; alternate. N6-succinyllysine; alternate is present on residues K458, K522, and K527. K527 and K532 each carry N6-glutaryllysine; alternate. S537 carries the phosphoserine; alternate modification. Residue S537 is glycosylated (O-linked (GlcNAc) serine; alternate). S540 carries the phosphoserine modification. An ATP-grasp 1 domain is found at 551 to 743; that stretch reads SDKLNEINEK…LAFIAAKIAL (193 aa). N6-acetyllysine; alternate is present on residues K553 and K560. N6-succinyllysine; alternate occurs at positions 553 and 560. K553 carries the post-translational modification N6-glutaryllysine; alternate. The residue at position 569 (S569) is a Phosphoserine. An N6-acetyllysine; alternate mark is found at K575, K603, and K612. N6-succinyllysine; alternate is present on residues K575, K603, and K612. K630 carries the post-translational modification N6-acetyllysine. K728 bears the N6-glutaryllysine mark. 12 positions are modified to N6-acetyllysine; alternate: K751, K757, K772, K793, K811, K831, K840, K841, K856, K875, K889, and K892. An N6-succinyllysine; alternate mark is found at K751 and K757. Residues K757, K772, K793, and K811 each carry the N6-glutaryllysine; alternate modification. N6-succinyllysine; alternate is present on K793. K831 and K840 each carry N6-succinyllysine; alternate. 5 positions are modified to N6-glutaryllysine; alternate: K841, K856, K875, K889, and K892. 3 positions are modified to N6-succinyllysine; alternate: K875, K889, and K892. Phosphoserine occurs at positions 896 and 898. Residues K908, K915, and K919 each carry the N6-acetyllysine; alternate modification. An N6-glutaryllysine; alternate mark is found at K908, K915, and K919. K915 and K919 each carry N6-succinyllysine; alternate. K935 carries the N6-acetyllysine modification. Position 1036 is a phosphoserine (S1036). K1074 carries the N6-acetyllysine; alternate modification. An N6-succinyllysine; alternate modification is found at K1074. Residue K1074 is modified to N6-glutaryllysine; alternate. 3 positions are modified to phosphoserine: S1079, S1090, and S1093. The ATP-grasp 2 domain occupies 1093–1284; the sequence is SAVLDELKVA…FIDVATKVMI (192 aa). K1100 bears the N6-acetyllysine; alternate mark. At K1100 the chain carries N6-succinyllysine; alternate. The residue at position 1149 (K1149) is an N6-succinyllysine. An N6-acetyllysine; alternate mark is found at K1168 and K1183. 2 positions are modified to N6-succinyllysine; alternate: K1168 and K1183. N6-glutaryllysine; alternate is present on residues K1168 and K1183. A Phosphoserine modification is found at S1203. K1222 carries the N6-acetyllysine modification. K1224 is subject to N6-glutaryllysine. An N6-acetyllysine; alternate mark is found at K1232, K1269, and K1291. N6-succinyllysine; alternate occurs at positions 1232, 1269, and 1291. S1331 carries an O-linked (GlcNAc) serine glycan. An O-linked (GlcNAc) threonine glycan is attached at T1332. Residues 1355-1500 form the MGS-like domain; the sequence is FKIPQKGILI…YRQYSAGKAA (146 aa). The residue at position 1356 (K1356) is an N6-acetyllysine; alternate. Residues K1356 and K1360 each carry the N6-succinyllysine; alternate modification. K1356 and K1360 each carry N6-glutaryllysine; alternate. Residues T1391, T1394, and W1410 each coordinate N-acetyl-L-glutamate. Phosphoserine is present on residues S1419 and S1431. Residues N1437 and N1440 each coordinate N-acetyl-L-glutamate. K1444 is subject to N6-acetyllysine; alternate. K1444 carries the post-translational modification N6-succinyllysine; alternate. An N-acetyl-L-glutamate-binding site is contributed by N1449. K1471, K1479, and K1486 each carry N6-acetyllysine; alternate. Residues K1471, K1479, and K1486 each carry the N6-succinyllysine; alternate modification. K1479 and K1486 each carry N6-glutaryllysine; alternate.

Can form homooligomers (monomers as predominant form and dimers). In terms of assembly, (Microbial infection) Interacts with P.berghei (ANKA strain) phospholipid scramblase PLSCR; the interaction is involved in the interaction between parasite sporozoites and host hepatocytes. In terms of processing, undergoes proteolytic cleavage in the C-terminal region corresponding to the loss of approximately 12 AA residues from the C-terminus. Acetylation of Lys-287, Lys-603, Lys-841 and Lys-1291 is observed in liver mitochondria from fasted mice but not from fed mice. Post-translationally, succinylated at Lys-44, Lys-287 and Lys-1291. Desuccinylated at Lys-1291 by SIRT5, leading to activation. In terms of processing, glutarylated. Glutarylation levels increase during fasting. Deglutarylated by SIRT5 at Lys-55, Lys-219, Lys-412, Lys-889, Lys-892, Lys-915, Lys-1360 and Lys-1486, leading to activation. As to expression, expressed in hepatocytes (at protein level).

The protein resides in the mitochondrion. The protein localises to the nucleus. Its subcellular location is the nucleolus. It localises to the cell membrane. It catalyses the reaction hydrogencarbonate + NH4(+) + 2 ATP = carbamoyl phosphate + 2 ADP + phosphate + 2 H(+). Its activity is regulated as follows. Requires N-acetyl-L-glutamate (NAG) as an allosteric activator. In terms of biological role, involved in the urea cycle of ureotelic animals where the enzyme plays an important role in removing excess ammonia from the cell. The chain is Carbamoyl-phosphate synthase [ammonia], mitochondrial (Cps1) from Mus musculus (Mouse).